Here is a 197-residue protein sequence, read N- to C-terminus: Phosphoheptose isomerase (197 aa).

Residues M36–E197 form the SIS domain. N51–G53 contributes to the substrate binding site. Residues H60 and E64 each coordinate Zn(2+). Residues E64, N93–D94, S119–S121, S124, and Q174 each bind substrate. Q174 and H182 together coordinate Zn(2+).

This sequence belongs to the SIS family. GmhA subfamily. As to quaternary structure, homotetramer. Zn(2+) serves as cofactor.

Its subcellular location is the cytoplasm. The catalysed reaction is 2 D-sedoheptulose 7-phosphate = D-glycero-alpha-D-manno-heptose 7-phosphate + D-glycero-beta-D-manno-heptose 7-phosphate. Its pathway is carbohydrate biosynthesis; D-glycero-D-manno-heptose 7-phosphate biosynthesis; D-glycero-alpha-D-manno-heptose 7-phosphate and D-glycero-beta-D-manno-heptose 7-phosphate from sedoheptulose 7-phosphate: step 1/1. Functionally, catalyzes the isomerization of sedoheptulose 7-phosphate in D-glycero-D-manno-heptose 7-phosphate. The protein is Phosphoheptose isomerase of Pseudomonas syringae pv. syringae (strain B728a).